Here is an 83-residue protein sequence, read N- to C-terminus: Hepcidin-2 (83 aa).

Positions 1–26 (MALSTRTQAACLLLLLLASLSSTTYL) are cleaved as a signal peptide. The propeptide occupies 27–53 (QQQMRQTTELQPLHGEESRADIAIPMQ). Intrachain disulfides connect Cys65–Cys81, Cys68–Cys71, Cys69–Cys77, and Cys72–Cys80.

The protein belongs to the hepcidin family. Highly expressed in the liver and to a much lesser extent in the heart. Also expressed in pancreas.

The protein localises to the secreted. Seems to act as a signaling molecule involved in the maintenance of iron homeostasis. This is Hepcidin-2 (Hamp2) from Mus musculus (Mouse).